The chain runs to 466 residues: Cytochrome c-552 (466 aa).

The signal sequence occupies residues 1–27 (MVRNLTKKSFALSALVAASLMASGVMA). H87 serves as a coordination point for heme c. Residues C115, C118, and K119 each coordinate heme. Heme c contacts are provided by C153, C156, H157, C195, C198, and H199. The Ca(2+) site is built by E201, Y202, K250, and Q252. Y202 serves as a coordination point for substrate. Substrate is bound at residue H253. Residues H264, C271, C274, H275, H290, C303, C306, H307, and H382 each contribute to the heme c site.

The protein belongs to the cytochrome c-552 family. Ca(2+) serves as cofactor. It depends on heme c as a cofactor.

It is found in the periplasm. It carries out the reaction 6 Fe(III)-[cytochrome c] + NH4(+) + 2 H2O = 6 Fe(II)-[cytochrome c] + nitrite + 8 H(+). It functions in the pathway nitrogen metabolism; nitrate reduction (assimilation). Functionally, catalyzes the reduction of nitrite to ammonia, consuming six electrons in the process. The sequence is that of Cytochrome c-552 from Shewanella sediminis (strain HAW-EB3).